A 252-amino-acid polypeptide reads, in one-letter code: Neurexophilin-3 (252 aa).

Positions 1–22 (MQLTRCCFVFLVQGSLYLVICG) are cleaved as a signal peptide. The interval 23–75 (QDDGPPGSEDPERDDHEGQPRPRVPRKRGHISPKSRPMANSTLLGLLAPPGEA) is II. The tract at residues 27–58 (PPGSEDPERDDHEGQPRPRVPRKRGHISPKSR) is disordered. The span at 45-55 (RVPRKRGHISP) shows a compositional bias: basic residues. N-linked (GlcNAc...) asparagine glycans are attached at residues asparagine 62, asparagine 127, asparagine 137, and asparagine 143. Residues 76–157 (WGILGQPPNR…LVPPSKAVEF (82 aa)) are III. Residues 158–166 (HQEQQIFIE) form an IV (linker domain) region. The interval 167-252 (AKASKIFNCR…HSDTPYYPSG (86 aa)) is v (Cys-rich).

Belongs to the neurexophilin family. Post-translationally, may be proteolytically processed at the boundary between the N-terminal non-conserved and the central conserved domain in neuron-like cells. Highest level in brain.

It localises to the secreted. In terms of biological role, may be signaling molecules that resemble neuropeptides. Ligand for alpha-neurexins. The protein is Neurexophilin-3 (NXPH3) of Homo sapiens (Human).